Reading from the N-terminus, the 30-residue chain is Cycloviolin-D (30 aa).

Residues 1-30 constitute a cross-link (cyclopeptide (Gly-Asn)); it reads GFPCGESCVFIPCISAAIGCSCKNKVCYRN. 3 cysteine pairs are disulfide-bonded: Cys-4-Cys-20, Cys-8-Cys-22, and Cys-13-Cys-27.

This is a cyclic peptide.

Probably participates in a plant defense mechanism. Has anti-HIV activity. This chain is Cycloviolin-D, found in Leonia cymosa (Sacha uba).